The sequence spans 257 residues: Probable S-adenosylmethionine-dependent methyltransferase MSMEG_2350/MSMEI_2290 (257 aa).

This sequence belongs to the methyltransferase superfamily.

Probable S-adenosylmethionine-dependent methyltransferase required for the 6-O-methylation of the polysaccharide backbone of 6-O-methylglucosyl lipopolysaccharides (MGLP). In Mycolicibacterium smegmatis (strain ATCC 700084 / mc(2)155) (Mycobacterium smegmatis), this protein is Probable S-adenosylmethionine-dependent methyltransferase MSMEG_2350/MSMEI_2290.